Consider the following 536-residue polypeptide: Chaperonin GroEL (536 aa).

Residues 29 to 32 (TLGP), 86 to 90 (DGTTT), Gly412, and Asp493 each bind ATP.

This sequence belongs to the chaperonin (HSP60) family. In terms of assembly, forms a cylinder of 14 subunits composed of two heptameric rings stacked back-to-back. Interacts with the co-chaperonin GroES.

It localises to the cytoplasm. It catalyses the reaction ATP + H2O + a folded polypeptide = ADP + phosphate + an unfolded polypeptide.. Its function is as follows. Together with its co-chaperonin GroES, plays an essential role in assisting protein folding. The GroEL-GroES system forms a nano-cage that allows encapsulation of the non-native substrate proteins and provides a physical environment optimized to promote and accelerate protein folding. In Onion yellows phytoplasma (strain OY-M), this protein is Chaperonin GroEL.